The primary structure comprises 188 residues: Elongation factor P (188 aa).

The protein belongs to the elongation factor P family.

The protein resides in the cytoplasm. The protein operates within protein biosynthesis; polypeptide chain elongation. Its function is as follows. Involved in peptide bond synthesis. Stimulates efficient translation and peptide-bond synthesis on native or reconstituted 70S ribosomes in vitro. Probably functions indirectly by altering the affinity of the ribosome for aminoacyl-tRNA, thus increasing their reactivity as acceptors for peptidyl transferase. This Gemmatimonas aurantiaca (strain DSM 14586 / JCM 11422 / NBRC 100505 / T-27) protein is Elongation factor P.